The chain runs to 148 residues: Thiol-disulfide oxidoreductase YkuV (148 aa).

The 144-residue stretch at 2–145 folds into the Thioredoxin domain; it reads KLRQPMPELT…LEKRVNRVLA (144 aa). Cysteine 41 and cysteine 44 form a disulfide bridge.

Monomer.

The protein resides in the cytoplasm. Participates in various redox reactions through the reversible oxidation of its active center dithiol to a disulfide and catalyzes dithiol-disulfide exchange reactions. The polypeptide is Thiol-disulfide oxidoreductase YkuV (ykuV) (Bacillus subtilis (strain 168)).